Here is a 663-residue protein sequence, read N- to C-terminus: MSELSDEASEPELLNRSLSMWHGLGAQVSREELDVPLDLHTAASIGQYEVVKECVQRRELDLNKKNGGGWTPLMYASYIGHDTIVHLLLEAGVSVNVPTPEGQTPLMLASSCGNESIAYFLLQQGAELEMKDIQGWTALFHCTSAGHQQMVKFLLESGANANVREPVYGFTPLMEAAAAGHEIIVQYFLNHGVKVDTRDHSGATARMLAKQYGHMKIVALMETHSPVLPKSLYRSSENYEDLSSSDESWPVPQRQRPCRKKGLSIHEGPRALARITATGLGGKTPDSYEQVPPRGYVTFTSSDENTMEGEGLCYRDVTSPINERDVESSSSSSREEPTFCASLGPVWRSSSSDGLARAQGLSSEASIESNEDSDHARKSSVRKQTRTYLKNKSRHNNSDGHWPSSTGTARTPGSEPQAEKSPYSGPQDLATLLEQIGCLKYLQVFEEQDVDLRIFLTLTESDLKEIGITLFGPKRKMTSAIARWHSSARPPSDALELAYADRLEAEMQELAIQLHKCCEEAEALRGQVSQEQELRAVVESCLLEQDSARKDIHAQLQEAQTLAQDAALVLDQLRACQAELSARLKQHHSPSEATQNPPFLPADSKGWPIPLQALSLPELSGALEDRVHEMGIMLRNAEPGETTDAEWEEMEGTIARRDDSDVG.

Positions 1–421 (MSELSDEASE…PGSEPQAEKS (421 aa)) are interaction with NEK7. 2 positions are modified to phosphoserine: S2 and S5. ANK repeat units follow at residues 34–64 (DVPLDLHTAASIGQYEVVKECVQRRELDLNK), 68–97 (GGWTPLMYASYIGHDTIVHLLLEAGVSVNV), 101–130 (EGQTPLMLASSCGNESIAYFLLQQGAELEM), 134–163 (QGWTALFHCTSAGHQQMVKFLLESGANANV), 168–197 (YGFTPLMEAAAAGHEIIVQYFLNHGVKVDT), and 201–220 (SGATARMLAKQYGHMKIVAL). At N96 the chain carries 3-hydroxyasparagine. A phosphoserine mark is found at S201, S225, S243, S244, and S245. 2 disordered regions span residues 242 to 261 (LSSSDESWPVPQRQRPCRKK) and 278 to 425 (TGLG…PYSG). Position 318 is a phosphothreonine (T318). Position 319 is a phosphoserine (S319). Basic and acidic residues predominate over residues 322 to 337 (NERDVESSSSSSREEP). 3 positions are modified to phosphoserine: S366, S369, and S373. Residues 378-395 (KSSVRKQTRTYLKNKSRH) show a composition bias toward basic residues. The SAM domain maps to 424-487 (SGPQDLATLL…TSAIARWHSS (64 aa)). Residues 500–575 (ADRLEAEMQE…AALVLDQLRA (76 aa)) adopt a coiled-coil conformation. The residue at position 540 (S540) is a Phosphoserine. Disordered regions lie at residues 585 to 604 (KQHHSPSEATQNPPFLPADS) and 637 to 663 (AEPGETTDAEWEEMEGTIARRDDSDVG). Residues 641 to 651 (ETTDAEWEEME) are compositionally biased toward acidic residues. A compositionally biased stretch (basic and acidic residues) spans 654-663 (IARRDDSDVG).

Homooligomer. Interacts (via SAM domain) with ANKS6 (via SAM domain). Interacts with BICC1. Interacts with NPHP1. Interacts with NEK8. Interacts with HIF1AN. Interacts with NEK7; this interaction alters the subcellular distribution of NEK7 by preventing its nuclear translocation. Post-translationally, hydroxylated at Asn-96, most probably by HIF1AN. In terms of processing, phosphorylations at Ser-5, Ser-225, Thr-318, Ser-319, Ser-366 and Ser-369 occur in a NEK7-dependent manner. Polyubiquitinated.

The protein localises to the cell projection. Its subcellular location is the cilium. It is found in the cytoplasm. Functionally, may be involved in vasopressin signaling in the kidney. The protein is Ankyrin repeat and SAM domain-containing protein 3 (Anks3) of Rattus norvegicus (Rat).